The primary structure comprises 233 residues: Large ribosomal subunit protein uL1 (233 aa).

It belongs to the universal ribosomal protein uL1 family. As to quaternary structure, part of the 50S ribosomal subunit.

Functionally, binds directly to 23S rRNA. The L1 stalk is quite mobile in the ribosome, and is involved in E site tRNA release. Protein L1 is also a translational repressor protein, it controls the translation of the L11 operon by binding to its mRNA. In Aeromonas salmonicida (strain A449), this protein is Large ribosomal subunit protein uL1.